The chain runs to 113 residues: U11-theraphotoxin-Hhn1g (113 aa).

A signal peptide spans 1-21 (MNTVRVTFLLVFVLAVSLGQA). Residues 22–74 (DKDENRMEMQEKTEQGKSYLDFAENLLLQKLEELEAKLLEEDSEESRNSRQKR) constitute a propeptide that is removed on maturation. The tract at residues 61–83 (EEDSEESRNSRQKRCIGEGVPCD) is disordered. 3 disulfide bridges follow: cysteine 75–cysteine 90, cysteine 82–cysteine 95, and cysteine 89–cysteine 110.

This sequence belongs to the neurotoxin 14 (magi-1) family. 01 (HNTX-16) subfamily. As to expression, expressed by the venom gland.

It localises to the secreted. In terms of biological role, probable ion channel inhibitor. This chain is U11-theraphotoxin-Hhn1g, found in Cyriopagopus hainanus (Chinese bird spider).